A 321-amino-acid polypeptide reads, in one-letter code: Olfactory receptor 52N2 (321 aa).

The Extracellular segment spans residues 1–27 (MSGDNSSSLTPGFFILNGVPGLEATHI). Asn-5 carries an N-linked (GlcNAc...) asparagine glycan. Residues 28–48 (WISLPFCFMYIIAVVGNCGLI) traverse the membrane as a helical segment. At 49–56 (CLISHEEA) the chain is on the cytoplasmic side. A helical transmembrane segment spans residues 57 to 77 (LHRPMYYFLALLSFTDVTLCT). Topologically, residues 78–101 (TMVPNMLCIFWFNLKEIDFNACLA) are extracellular. Cys-99 and Cys-191 are disulfide-bonded. A helical membrane pass occupies residues 102-122 (QMFFVHMLTGMESGVLMLMAL). Residues 123–141 (DRYVAICYPLRYATILTNP) are Cytoplasmic-facing. A helical membrane pass occupies residues 142–162 (VIAKAGLATFLRNVMLIIPFT). The Extracellular portion of the chain corresponds to 163-198 (LLTKRLPYCRGNFIPHTYCDHMSVAKVSCGNFKVNA). The helical transmembrane segment at 199–219 (IYGLMVALLIGVFDICCISVS) threads the bilayer. Residues 220-239 (YTMILQAVMSLSSADARHKA) are Cytoplasmic-facing. A helical transmembrane segment spans residues 240–260 (FSTCTSHMCSIVITYVAAFFT). At 261–276 (FFTHRFVGHNIPNHIH) the chain is on the extracellular side. A helical transmembrane segment spans residues 277-297 (IIVANLYLLLPPTMNPIVYGV). The Cytoplasmic portion of the chain corresponds to 298 to 321 (KTKQIQEGVIKFLLGDKVSFTYDK).

This sequence belongs to the G-protein coupled receptor 1 family.

It localises to the cell membrane. Functionally, odorant receptor. This Homo sapiens (Human) protein is Olfactory receptor 52N2 (OR52N2).